Here is a 650-residue protein sequence, read N- to C-terminus: DNA gyrase subunit B (650 aa).

The span at 400-414 (RRSQEARELTRRKSP) shows a compositional bias: basic and acidic residues. Positions 400–422 (RRSQEARELTRRKSPFDSGSLPG) are disordered. The Toprim domain maps to 435–549 (SELYIVEGDS…QGNIFIAQPP (115 aa)). Glu441, Asp514, and Asp516 together coordinate Mg(2+).

The protein belongs to the type II topoisomerase GyrB family. Heterotetramer, composed of two GyrA and two GyrB chains. In the heterotetramer, GyrA contains the active site tyrosine that forms a transient covalent intermediate with DNA, while GyrB binds cofactors and catalyzes ATP hydrolysis. Mg(2+) is required as a cofactor. Mn(2+) serves as cofactor. Requires Ca(2+) as cofactor.

It is found in the cytoplasm. It carries out the reaction ATP-dependent breakage, passage and rejoining of double-stranded DNA.. Functionally, a type II topoisomerase that negatively supercoils closed circular double-stranded (ds) DNA in an ATP-dependent manner to modulate DNA topology and maintain chromosomes in an underwound state. Negative supercoiling favors strand separation, and DNA replication, transcription, recombination and repair, all of which involve strand separation. Also able to catalyze the interconversion of other topological isomers of dsDNA rings, including catenanes and knotted rings. Type II topoisomerases break and join 2 DNA strands simultaneously in an ATP-dependent manner. This Mycoplasma genitalium (strain ATCC 33530 / DSM 19775 / NCTC 10195 / G37) (Mycoplasmoides genitalium) protein is DNA gyrase subunit B.